A 179-amino-acid polypeptide reads, in one-letter code: Ribosome-recycling factor (179 aa).

The protein belongs to the RRF family.

The protein localises to the cytoplasm. In terms of biological role, responsible for the release of ribosomes from messenger RNA at the termination of protein biosynthesis. May increase the efficiency of translation by recycling ribosomes from one round of translation to another. In Chlamydia trachomatis serovar L2b (strain UCH-1/proctitis), this protein is Ribosome-recycling factor.